The chain runs to 427 residues: 3-phosphoshikimate 1-carboxyvinyltransferase (427 aa).

The 3-phosphoshikimate site is built by K22, S23, and R27. Phosphoenolpyruvate is bound at residue K22. Phosphoenolpyruvate contacts are provided by G96 and R124. 3-phosphoshikimate contacts are provided by S169, S170, Q171, S197, D313, N336, and K340. Q171 provides a ligand contact to phosphoenolpyruvate. D313 serves as the catalytic Proton acceptor. R344, R386, and K411 together coordinate phosphoenolpyruvate.

The protein belongs to the EPSP synthase family. Monomer.

The protein resides in the cytoplasm. It carries out the reaction 3-phosphoshikimate + phosphoenolpyruvate = 5-O-(1-carboxyvinyl)-3-phosphoshikimate + phosphate. The protein operates within metabolic intermediate biosynthesis; chorismate biosynthesis; chorismate from D-erythrose 4-phosphate and phosphoenolpyruvate: step 6/7. Functionally, catalyzes the transfer of the enolpyruvyl moiety of phosphoenolpyruvate (PEP) to the 5-hydroxyl of shikimate-3-phosphate (S3P) to produce enolpyruvyl shikimate-3-phosphate and inorganic phosphate. The protein is 3-phosphoshikimate 1-carboxyvinyltransferase of Salmonella schwarzengrund (strain CVM19633).